The following is a 446-amino-acid chain: MTLVRFAPSPTGYLHIGNARPALLNALFARRTGGRFLLRLDDTDAERSTEAFAEAIGEDLAWLGIVPDLFARQSARTAQHDAAADRLRAAGRLYPCYETPEELERRRRRQLGRGQPPIYDRAALRLTGDERAALEAEGRRPHWRFLLEARTVGWDDLVRGPAHVDCASLSDPVLIRADGSYLYTLPSVVDDADLGITHVIRGEDHVTNTGVQVQIFEALGAAVPVFGHHNLLTTADGEGLSKRLGHLSLRGLREAGYEPAAVRSLAVLTGSAESVRAVPDLDTLAGLVDLGEISRAPARFDPAELDGLNARLIHAMPYREAAARLADLGIPADRAEAFWLAVRANLSRVPEAAPWWRVVTGPVEPVLTEPAVIAAAVESLPPEPFGPETWNAWTTEIRTRTGAKGRGLFMPLRLALTGLEHGPDLAGLLPLIGRERAARRLSGAAA.

A 'HIGH' region motif is present at residues 8-18 (PSPTGYLHIGN). The short motif at 239–243 (GLSKR) is the 'KMSKS' region element. Lysine 242 is a binding site for ATP.

The protein belongs to the class-I aminoacyl-tRNA synthetase family. Glutamate--tRNA ligase type 1 subfamily. As to quaternary structure, monomer.

The protein localises to the cytoplasm. The catalysed reaction is tRNA(Glu) + L-glutamate + ATP = L-glutamyl-tRNA(Glu) + AMP + diphosphate. Its function is as follows. Catalyzes the attachment of glutamate to tRNA(Glu) in a two-step reaction: glutamate is first activated by ATP to form Glu-AMP and then transferred to the acceptor end of tRNA(Glu). The protein is Glutamate--tRNA ligase 2 of Methylobacterium radiotolerans (strain ATCC 27329 / DSM 1819 / JCM 2831 / NBRC 15690 / NCIMB 10815 / 0-1).